We begin with the raw amino-acid sequence, 209 residues long: Large ribosomal subunit protein uL3c (209 aa).

Residues 132-154 (PMSHGSKNHRLPGSIGAGSTPGR) are disordered.

This sequence belongs to the universal ribosomal protein uL3 family. Part of the 50S ribosomal subunit.

The protein resides in the plastid. It is found in the cyanelle. Functionally, one of the primary rRNA binding proteins, it binds directly near the 3'-end of the 23S rRNA, where it nucleates assembly of the 50S subunit. The polypeptide is Large ribosomal subunit protein uL3c (rpl3) (Cyanophora paradoxa).